We begin with the raw amino-acid sequence, 574 residues long: Septation ring formation regulator EzrA (574 aa).

At 1–7 (MSSGIIL) the chain is on the extracellular side. A helical membrane pass occupies residues 8–26 (LIVAIVLLVIIAYLIGVII). Residues 27 to 574 (RKRNDSMIGT…YERTREHIRF (548 aa)) are Cytoplasmic-facing. Coiled coils occupy residues 102–140 (NFIRAKHEINNVESQLNLVEEDITSIREALSILKEQEEK), 243–379 (RRLL…GQEI), and 459–520 (QLEA…SFEA).

Belongs to the EzrA family.

The protein resides in the cell membrane. In terms of biological role, negative regulator of FtsZ ring formation; modulates the frequency and position of FtsZ ring formation. Inhibits FtsZ ring formation at polar sites. Interacts either with FtsZ or with one of its binding partners to promote depolymerization. This chain is Septation ring formation regulator EzrA, found in Streptococcus uberis (strain ATCC BAA-854 / 0140J).